The following is a 500-amino-acid chain: Lysine--tRNA ligase (500 aa).

Residues Glu411 and Glu418 each coordinate Mg(2+).

It belongs to the class-II aminoacyl-tRNA synthetase family. In terms of assembly, homodimer. Mg(2+) serves as cofactor.

The protein resides in the cytoplasm. It catalyses the reaction tRNA(Lys) + L-lysine + ATP = L-lysyl-tRNA(Lys) + AMP + diphosphate. The protein is Lysine--tRNA ligase of Actinobacillus pleuropneumoniae serotype 5b (strain L20).